The sequence spans 145 residues: Bacilliredoxin BH2759 (145 aa).

Belongs to the bacilliredoxin family.

This is Bacilliredoxin BH2759 from Halalkalibacterium halodurans (strain ATCC BAA-125 / DSM 18197 / FERM 7344 / JCM 9153 / C-125) (Bacillus halodurans).